Reading from the N-terminus, the 354-residue chain is Hyaluronan and proteoglycan link protein 1 (354 aa).

The propeptide occupies 1–15 (MKSLLLLVLISICGA). 2 N-linked (GlcNAc...) asparagine glycosylation sites follow: Asn-21 and Asn-56. One can recognise an Ig-like V-type domain in the interval 38–152 (PRLLVEAEQA…EGLEDDTAVV (115 aa)). 5 disulfides stabilise this stretch: Cys-61-Cys-139, Cys-181-Cys-252, Cys-205-Cys-226, Cys-279-Cys-349, and Cys-304-Cys-325. 2 Link domains span residues 159 to 254 (VVFP…FCFT) and 259 to 351 (GRFY…YCFR).

It belongs to the HAPLN family.

It localises to the secreted. The protein resides in the extracellular space. Its subcellular location is the extracellular matrix. In terms of biological role, stabilizes the aggregates of proteoglycan monomers with hyaluronic acid in the extracellular cartilage matrix. This chain is Hyaluronan and proteoglycan link protein 1 (HAPLN1), found in Equus caballus (Horse).